The following is a 334-amino-acid chain: D-fructose 1,6-bisphosphatase class 2/sedoheptulose 1,7-bisphosphatase (334 aa).

Mn(2+)-binding residues include Asp33, Glu57, Asp85, and Glu88. Substrate is bound by residues 88–90 (EGT), Tyr119, 164–166 (RAR), and 186–188 (DGD). Residue Glu213 coordinates Mn(2+).

The protein belongs to the FBPase class 2 family. As to quaternary structure, homotetramer. Requires Mn(2+) as cofactor.

It catalyses the reaction beta-D-fructose 1,6-bisphosphate + H2O = beta-D-fructose 6-phosphate + phosphate. It carries out the reaction D-sedoheptulose 1,7-bisphosphate + H2O = D-sedoheptulose 7-phosphate + phosphate. It functions in the pathway carbohydrate biosynthesis; Calvin cycle. Catalyzes the hydrolysis of fructose 1,6-bisphosphate (Fru 1,6-P2) and sedoheptulose 1,7-bisphosphate (Sed 1,7-P2) to fructose 6-phosphate and sedoheptulose 7-phosphate, respectively. In Synechococcus sp. (strain CC9605), this protein is D-fructose 1,6-bisphosphatase class 2/sedoheptulose 1,7-bisphosphatase.